Reading from the N-terminus, the 599-residue chain is UvrABC system protein C (599 aa).

The GIY-YIG domain maps to 15–93 (EKPGCYQYFD…IKEYQPRYNV (79 aa)). The 36-residue stretch at 207 to 242 (HRLVRMYRDRMQVYSEGLRFEEAQICKERIELLERY) folds into the UVR domain.

Belongs to the UvrC family. Interacts with UvrB in an incision complex.

It localises to the cytoplasm. In terms of biological role, the UvrABC repair system catalyzes the recognition and processing of DNA lesions. UvrC both incises the 5' and 3' sides of the lesion. The N-terminal half is responsible for the 3' incision and the C-terminal half is responsible for the 5' incision. This is UvrABC system protein C from Porphyromonas gingivalis (strain ATCC BAA-308 / W83).